The sequence spans 695 residues: Protein ACTIVITY OF BC1 COMPLEX KINASE 7, chloroplastic (695 aa).

The Protein kinase domain maps to 259–589 (EFEEQPIAAA…VQEIRKQADD (331 aa)). ATP is bound by residues 265–273 (IAAASLGQV) and Lys-287. Asp-421 functions as the Proton acceptor in the catalytic mechanism. 2 helical membrane-spanning segments follow: residues 633-653 (TILQ…NIGV) and 659-679 (GSQL…LLVL).

The protein belongs to the protein kinase superfamily. ADCK protein kinase family. Mostly expressed in leaves and flowers, and, to a lower extent, in roots.

Its subcellular location is the plastid. It is found in the chloroplast thylakoid membrane. It localises to the chloroplast. The protein resides in the plastoglobule. It carries out the reaction L-seryl-[protein] + ATP = O-phospho-L-seryl-[protein] + ADP + H(+). It catalyses the reaction L-threonyl-[protein] + ATP = O-phospho-L-threonyl-[protein] + ADP + H(+). Involved in resistance to oxidative stress. Influences responses to reactive oxygen species (ROS) production. Regulates plastoglobules formation in thylakoids. Together with OSA1, regulates iron distribution within the chloroplast and mediates the oxidative stress response. Together with ABC1K8, influences chloroplast lipid synthesis/accumulation and modulates chloroplast membrane composition in response to stress. This Arabidopsis thaliana (Mouse-ear cress) protein is Protein ACTIVITY OF BC1 COMPLEX KINASE 7, chloroplastic.